The sequence spans 203 residues: Pyrrolidone-carboxylate peptidase (203 aa).

Residues E78, C141, and H165 contribute to the active site.

Belongs to the peptidase C15 family. In terms of assembly, homotetramer.

The protein resides in the cytoplasm. It carries out the reaction Release of an N-terminal pyroglutamyl group from a polypeptide, the second amino acid generally not being Pro.. Functionally, removes 5-oxoproline from various penultimate amino acid residues except L-proline. This chain is Pyrrolidone-carboxylate peptidase, found in Thermoanaerobacter pseudethanolicus (strain ATCC 33223 / 39E) (Clostridium thermohydrosulfuricum).